Consider the following 147-residue polypeptide: Large ribosomal subunit protein uL13 (147 aa).

It belongs to the universal ribosomal protein uL13 family. In terms of assembly, part of the 50S ribosomal subunit.

Functionally, this protein is one of the early assembly proteins of the 50S ribosomal subunit, although it is not seen to bind rRNA by itself. It is important during the early stages of 50S assembly. This chain is Large ribosomal subunit protein uL13, found in Mycolicibacterium smegmatis (strain ATCC 700084 / mc(2)155) (Mycobacterium smegmatis).